A 398-amino-acid polypeptide reads, in one-letter code: 8-amino-7-oxononanoate synthase (398 aa).

Residue Arg23 coordinates substrate. Gly110–Tyr111 is a binding site for pyridoxal 5'-phosphate. Position 135 (His135) interacts with substrate. Pyridoxal 5'-phosphate is bound by residues Ser181, His209, and Thr237. Position 240 is an N6-(pyridoxal phosphate)lysine (Lys240). A substrate-binding site is contributed by Thr354.

The protein belongs to the class-II pyridoxal-phosphate-dependent aminotransferase family. BioF subfamily. In terms of assembly, homodimer. Pyridoxal 5'-phosphate is required as a cofactor.

It catalyses the reaction 6-carboxyhexanoyl-[ACP] + L-alanine + H(+) = (8S)-8-amino-7-oxononanoate + holo-[ACP] + CO2. The protein operates within cofactor biosynthesis; biotin biosynthesis. Functionally, catalyzes the decarboxylative condensation of pimeloyl-[acyl-carrier protein] and L-alanine to produce 8-amino-7-oxononanoate (AON), [acyl-carrier protein], and carbon dioxide. The sequence is that of 8-amino-7-oxononanoate synthase from Anaeromyxobacter dehalogenans (strain 2CP-1 / ATCC BAA-258).